The sequence spans 324 residues: Beta-ketoacyl-[acyl-carrier-protein] synthase III (324 aa).

Active-site residues include C112 and H249. Residues Q250–R254 form an ACP-binding region. Residue N279 is part of the active site.

It belongs to the thiolase-like superfamily. FabH family. As to quaternary structure, homodimer.

The protein resides in the cytoplasm. The enzyme catalyses malonyl-[ACP] + acetyl-CoA + H(+) = 3-oxobutanoyl-[ACP] + CO2 + CoA. Its pathway is lipid metabolism; fatty acid biosynthesis. Its function is as follows. Catalyzes the condensation reaction of fatty acid synthesis by the addition to an acyl acceptor of two carbons from malonyl-ACP. Catalyzes the first condensation reaction which initiates fatty acid synthesis and may therefore play a role in governing the total rate of fatty acid production. Possesses both acetoacetyl-ACP synthase and acetyl transacylase activities. Its substrate specificity determines the biosynthesis of branched-chain and/or straight-chain of fatty acids. In Streptococcus pneumoniae serotype 19F (strain G54), this protein is Beta-ketoacyl-[acyl-carrier-protein] synthase III.